Consider the following 336-residue polypeptide: MGVDLGDILSKKKISLENLSGCWIAVDGFNTLYQFLSIIRQPDGTPLMDASGRVTSHLSGLLYRMTNLIEVGIRVAFVFDGTPPELKAGTLAARAQMKEAAEIQLQEAIATGVDSFRYAQATARINSEILHDSIRLLDAMGIPYVQAPSEGEAQAAFMAIRGDVDYVASQDYDSLLFGAPRVVRNLAITGRRKMPRKNIYIDVPPEVIILEEELTRLGISREQLIDIGIMCGTDYNRGLPKVGPKRALKLIREHGCLEAVLDALGESIENFREIRELFLHPAVTESYELRMRKPMVDEIVGFLCNERNFSEDRVRKAAERLNASYRSGQSTLERWL.

The segment at 1–98 (MGVDLGDILS…GTLAARAQMK (98 aa)) is N-domain. Mg(2+)-binding residues include Asp-27, Asp-80, Glu-150, Glu-152, Asp-171, Asp-173, and Asp-234. Residues 114–255 (DSFRYAQATA…RALKLIREHG (142 aa)) are I-domain. The segment at 328 to 336 (GQSTLERWL) is interaction with PCNA.

The protein belongs to the XPG/RAD2 endonuclease family. FEN1 subfamily. As to quaternary structure, interacts with PCNA. PCNA stimulates the nuclease activity without altering cleavage specificity. Mg(2+) is required as a cofactor.

In terms of biological role, structure-specific nuclease with 5'-flap endonuclease and 5'-3' exonuclease activities involved in DNA replication and repair. During DNA replication, cleaves the 5'-overhanging flap structure that is generated by displacement synthesis when DNA polymerase encounters the 5'-end of a downstream Okazaki fragment. Binds the unpaired 3'-DNA end and kinks the DNA to facilitate 5' cleavage specificity. Cleaves one nucleotide into the double-stranded DNA from the junction in flap DNA, leaving a nick for ligation. Also involved in the base excision repair (BER) pathway. Acts as a genome stabilization factor that prevents flaps from equilibrating into structures that lead to duplications and deletions. Also possesses 5'-3' exonuclease activity on nicked or gapped double-stranded DNA. The protein is Flap endonuclease 1 of Methanothrix thermoacetophila (strain DSM 6194 / JCM 14653 / NBRC 101360 / PT) (Methanosaeta thermophila).